We begin with the raw amino-acid sequence, 348 residues long: Rhodopsin (348 aa).

The residue at position 1 (M1) is an N-acetylmethionine. At 1–36 (MNGTEGPNFYVPFSNKTGVVRSPFEAPQYYLAEPWQ) the chain is on the extracellular side. N2 and N15 each carry an N-linked (GlcNAc...) asparagine glycan. A helical transmembrane segment spans residues 37-61 (FSMLAAYMFLLIVLGFPINFLTLYV). The Cytoplasmic portion of the chain corresponds to 62–73 (TVQHKKLRTPLN). The helical transmembrane segment at 74–96 (YILLNLAVADLFMVFGGFTTTLY) threads the bilayer. At 97–110 (TSLHGYFVFGPTGC) the chain is on the extracellular side. Cysteines 110 and 187 form a disulfide. The chain crosses the membrane as a helical span at residues 111 to 133 (NLEGFFATLGGEIALWSLVVLAI). A 'Ionic lock' involved in activated form stabilization motif is present at residues 134–136 (ERY). Residues 134–152 (ERYVVVCKPMSNFRFGENH) lie on the Cytoplasmic side of the membrane. A helical transmembrane segment spans residues 153-173 (AIMGVAFTWVMALACAAPPLV). The Extracellular portion of the chain corresponds to 174-202 (GWSRYIPQGMQCSCGALYFTLKPEINNES). E201 contacts Zn(2+). Residues 203 to 224 (FVIYMFVVHFSIPLIVIFFCYG) form a helical membrane-spanning segment. Over 225-252 (QLVFTVKEAAAQQQESATTQKAEKEVTR) the chain is Cytoplasmic. Residues 253 to 274 (MVIIMVIAFLICWLPYAGVAFY) traverse the membrane as a helical segment. The Extracellular segment spans residues 275 to 286 (IFTHQGSDFGPI). Q279 is a Zn(2+) binding site. A helical membrane pass occupies residues 287 to 308 (FMTIPAFFAKSSSVYNPVIYIM). K296 is subject to N6-(retinylidene)lysine. The Cytoplasmic portion of the chain corresponds to 309–348 (MNKQFRNCMLTTLCCGKNPLGDDEASTTVSKTETSQVAPA). 2 S-palmitoyl cysteine lipidation sites follow: C322 and C323. The interaction with SAG stretch occupies residues 330–348 (DDEASTTVSKTETSQVAPA). Position 334 is a phosphoserine (S334). S334 is subject to Phosphoserine; by RK and GRK7. 2 positions are modified to phosphothreonine: T335 and T336. Phosphothreonine; by RK and GRK7 is present on residues T335 and T336. S338 is modified (phosphoserine; by RK and GRK7). Residues T340 and T342 each carry the phosphothreonine modification. S343 is subject to Phosphoserine; by RK and GRK7.

Belongs to the G-protein coupled receptor 1 family. Opsin subfamily. In terms of assembly, homodimer. May form a complex composed of RHO, GRK1 and RCVRN in a Ca(2+)-dependent manner; RCVRN prevents the interaction between GRK1 and RHO. Interacts with GRK1. Interacts (phosphorylated form) with SAG. Interacts with GNAT1. Interacts with GNAT3. SAG and G-proteins compete for a common binding site. Interacts with PRCD; the interaction promotes PRCD stability. Forms a complex with ASAP1 and ARF4. Forms a complex with ASAP1, RAB11A, Rabin8/RAB3IP, ARF4 and RAB11FIP3; the complex regulates Golgi-to-cilia rhodopsin/RHO transport in photoreceptors. Phosphorylated on some or all of the serine and threonine residues present in the C-terminal region. In terms of processing, contains one covalently linked retinal chromophore. Upon light absorption, the covalently bound 11-cis-retinal is converted to all-trans-retinal. After hydrolysis of the Schiff base and release of the covalently bound all-trans-retinal, active rhodopsin is regenerated by binding of a fresh molecule of 11-cis-retinal.

The protein resides in the membrane. The protein localises to the cell projection. It is found in the cilium. It localises to the photoreceptor outer segment. In terms of biological role, photoreceptor required for image-forming vision at low light intensity. Required for photoreceptor cell viability after birth. Light-induced isomerization of 11-cis to all-trans retinal triggers a conformational change that activates signaling via G-proteins. Subsequent receptor phosphorylation mediates displacement of the bound G-protein alpha subunit by the arrestin SAG and terminates signaling. The polypeptide is Rhodopsin (RHO) (Ovis aries (Sheep)).